The chain runs to 592 residues: Glutathione-regulated potassium-efflux system protein KefB (592 aa).

A run of 13 helical transmembrane segments spans residues 4–24 (SDFLLAGVLFLFAAVAAVPLA), 29–49 (IGAVLGYLLAGIAIGPWGLGF), 55–75 (EILHFSELGVVFLMFIIGLEL), 87–107 (IFGVGAAQVLLSAALLAGLLM), 115–135 (AAVVGGIGLAMSSTAMALQLM), 152–172 (VLLFQDLAVIPALALVPLLAG), 177–197 (HFDWMKIGMKVLAFVGMLIGG), 207–227 (FIAASGVREVFTAATLLLVLG), 230–250 (LFMDALGLSMALGTFIAGVLL), 268–288 (GLLLGLFFISVGMSLNLGVLY), 291–311 (LLWVVISVVVLVAVKILVLYL), 324–344 (MQFAGVLSQGGEFAFVLFSTA), and 356–376 (ALLLVTVTLSMMTTPLLMKLV). The region spanning 400-519 (KPQVIVVGFG…AGVTQFSRET (120 aa)) is the RCK N-terminal domain.

It belongs to the monovalent cation:proton antiporter 2 (CPA2) transporter (TC 2.A.37) family. KefB subfamily. As to quaternary structure, interacts with the regulatory subunit KefG.

Its subcellular location is the cell inner membrane. Functionally, pore-forming subunit of a potassium efflux system that confers protection against electrophiles. Catalyzes K(+)/H(+) antiport. The polypeptide is Glutathione-regulated potassium-efflux system protein KefB (Escherichia coli O157:H7).